Consider the following 70-residue polypeptide: MARITVDDCLEKIPNRFQLTLVAAYRARQLANGAEPLVNVHGSKDKPTVLALREIAAGKVGLEVLNRGHA.

It belongs to the RNA polymerase subunit omega family. In terms of assembly, the RNAP catalytic core consists of 2 alpha, 1 beta, 1 beta' and 1 omega subunit. When a sigma factor is associated with the core the holoenzyme is formed, which can initiate transcription.

The enzyme catalyses RNA(n) + a ribonucleoside 5'-triphosphate = RNA(n+1) + diphosphate. Promotes RNA polymerase assembly. Latches the N- and C-terminal regions of the beta' subunit thereby facilitating its interaction with the beta and alpha subunits. The sequence is that of DNA-directed RNA polymerase subunit omega from Methylobacillus flagellatus (strain ATCC 51484 / DSM 6875 / VKM B-1610 / KT).